Reading from the N-terminus, the 195-residue chain is ATP-dependent Clp protease proteolytic subunit 2 (195 aa).

Ser-95 functions as the Nucleophile in the catalytic mechanism. The active site involves His-120.

The protein belongs to the peptidase S14 family. Fourteen ClpP subunits assemble into 2 heptameric rings which stack back to back to give a disk-like structure with a central cavity, resembling the structure of eukaryotic proteasomes.

Its subcellular location is the cytoplasm. The catalysed reaction is Hydrolysis of proteins to small peptides in the presence of ATP and magnesium. alpha-casein is the usual test substrate. In the absence of ATP, only oligopeptides shorter than five residues are hydrolyzed (such as succinyl-Leu-Tyr-|-NHMec, and Leu-Tyr-Leu-|-Tyr-Trp, in which cleavage of the -Tyr-|-Leu- and -Tyr-|-Trp bonds also occurs).. Functionally, cleaves peptides in various proteins in a process that requires ATP hydrolysis. Has a chymotrypsin-like activity. Plays a major role in the degradation of misfolded proteins. The polypeptide is ATP-dependent Clp protease proteolytic subunit 2 (Methylococcus capsulatus (strain ATCC 33009 / NCIMB 11132 / Bath)).